Consider the following 56-residue polypeptide: GSICLEPKVVGPCTAYFPRFYFNSETGKCTPFIYGGCEGNGNNFETLRACRGICRA.

A BPTI/Kunitz inhibitor domain is found at Cys-4–Cys-54. 3 cysteine pairs are disulfide-bonded: Cys-4–Cys-54, Cys-13–Cys-37, and Cys-29–Cys-50.

The protein belongs to the venom Kunitz-type family. Sea anemone type 2 potassium channel toxin subfamily.

Its subcellular location is the secreted. It is found in the nematocyst. Its function is as follows. This protease inhibitor shows two different activities, it inhibits both the capsaicin receptor TRPV1 and serine proteases. It partially blocks the capsaicin- and acid-induced response of TRPV1, a receptor of the pain pathway. It also weakly inhibits trypsin and chymotrypsin activity (Ki=0.5 uM and Ki=7 uM, respectively). In addition, it may also alter tachykinin levels by suppressing endogenous proteases. In vivo, it shows antinociceptive and analgesic activities. It significantly prolongs paw withdrawal latency and blocks heat-induced and chemical-induced acute pain. In addition, it also shows anti-inflammatory and analgesic effects in models of osteoarthritis and rheumatoid arthritis. In vivo, unlike other TRPV1 antagonists whose activity is associated with hyperthermia, this protein has the remarkable feature of dropping core body temperature. The chain is TauPI-stichotoxin-Hcr2d from Radianthus crispa (Leathery sea anemone).